The following is a 346-amino-acid chain: O-methyltransferase atr3 (346 aa).

Disordered stretches follow at residues 1–22 (MTSV…DDLM) and 52–88 (GLKS…WYHA). S-adenosyl-L-methionine is bound by residues 190–191 (DL) and 217–218 (DI).

It belongs to the class I-like SAM-binding methyltransferase superfamily. Homodimer.

The enzyme catalyses 4-O-demethylbarbatate + S-adenosyl-L-methionine = proatranorin I + S-adenosyl-L-homocysteine. It participates in secondary metabolite biosynthesis; terpenoid biosynthesis. O-methyltransferase; part of the gene cluster that mediates the biosynthesis of atranorin, a depside of polyketide origin that accumulates in the cortical or medullary layers of lichen thalli. Atr3 methylates the carboxyl group of 4-O-demethylbarbatic acid to yield proatranorin I. Atr3 is also able to methylate the atr2 product proatranorin III to produce the final compound atranorin. The first step in the pathway is performed by the non-reducing polyketide synthase atr1 that produces 4-O-demethylbarbatic acid composed of two 3-methylorsellinic acid (3MOA) moieties. The pathway continues with the actions of the cytochrome P450 monooygenase atr2 that catalizes the oxidation of c-9 and the O-methyltransferase atr3 that performs the methylation of the carboxyl group to yield atranorin, via the proatranorin II and III intermediates if atr2 acts first, or the proatranorin I intermediate if atr3 acts first. The chain is O-methyltransferase atr3 from Stereocaulon alpinum (Alpine snow lichen).